Consider the following 316-residue polypeptide: HPr kinase/phosphorylase (316 aa).

Catalysis depends on residues His-143 and Lys-164. Gly-158–Ser-165 contacts ATP. Ser-165 serves as a coordination point for Mg(2+). The active-site Proton acceptor; for phosphorylation activity. Proton donor; for dephosphorylation activity is Asp-182. Residues Leu-206–Asn-215 are important for the catalytic mechanism of both phosphorylation and dephosphorylation. Glu-207 contributes to the Mg(2+) binding site. Arg-251 is a catalytic residue. The segment at Pro-272–Arg-277 is important for the catalytic mechanism of dephosphorylation.

This sequence belongs to the HPrK/P family. In terms of assembly, homohexamer. The cofactor is Mg(2+).

The catalysed reaction is [HPr protein]-L-serine + ATP = [HPr protein]-O-phospho-L-serine + ADP + H(+). It carries out the reaction [HPr protein]-O-phospho-L-serine + phosphate + H(+) = [HPr protein]-L-serine + diphosphate. Functionally, catalyzes the ATP- as well as the pyrophosphate-dependent phosphorylation of a specific serine residue in HPr, a phosphocarrier protein of the phosphoenolpyruvate-dependent sugar phosphotransferase system (PTS). HprK/P also catalyzes the pyrophosphate-producing, inorganic phosphate-dependent dephosphorylation (phosphorolysis) of seryl-phosphorylated HPr (P-Ser-HPr). The protein is HPr kinase/phosphorylase of Stenotrophomonas maltophilia (strain K279a).